The following is a 359-amino-acid chain: G-protein coupled receptor 15 (359 aa).

Over 1-33 (MDPEETSVYLDYYYATSPNPDIRETHSHVPYTS) the chain is Extracellular. The helical transmembrane segment at 34–54 (VFLPVFYTAVFLTGVLGNLVL) threads the bilayer. At 55-69 (MGALHFKPGSRRLID) the chain is on the cytoplasmic side. The chain crosses the membrane as a helical span at residues 70–90 (IFIINLAASDFIFLVTLPLWV). Topologically, residues 91–120 (DKEASLGLWRTGSFLCKGSSYMISVNMHCS) are extracellular. A helical membrane pass occupies residues 121–141 (VFLLTCMSVDRYLAIVCPVVS). Topologically, residues 142–149 (RKFRRTDC) are cytoplasmic. Residues 150–170 (AYVVCASIWFISCLLGLPTLL) traverse the membrane as a helical segment. Residues 171-192 (SRELTLIDDKPYCAEKKATPLK) lie on the Extracellular side of the membrane. A helical transmembrane segment spans residues 193–213 (LIWSLVALIFTFFVPLLNIVT). The Cytoplasmic portion of the chain corresponds to 214 to 239 (CYCCIARKLCAHYQQSGRHNKKLKKS). The helical transmembrane segment at 240–260 (IKIILIVVAAFLVSWLPFNTF) threads the bilayer. The Extracellular segment spans residues 261–283 (KLLAIVSGLQERYFPSAMLQLGM). A helical transmembrane segment spans residues 284–304 (EVSGPLAFANSCVNPFIYYIF). Topologically, residues 305–359 (DSYIRRAIVHCLCPCLKNYDFGSSTETSDSHLTKALSTFIHAEDFTRRRKRSVSL) are cytoplasmic. The residue at position 358 (S358) is a Phosphoserine.

Belongs to the G-protein coupled receptor 1 family. Interacts with adapter YWHAE; this interaction promotes ER-to-Golgi transport of GPR15. Post-translationally, phosphorylation is necessary for YWHAE binding and efficient surface expression. In terms of processing, O-glycosylated. Sialylated O-glycans in the N-terminal tail inhibits binding of GPR15LG. Sulfation is required for efficient binding of GPR15LG.

It is found in the cell membrane. In terms of biological role, g protein-coupled receptor that plays an important role in immune homeostasis. Acts via its natural ligand GPR15LG, a chemokine-like polypeptide strongly expressed in gastrointestinal tissues. GPR15-GPR15LG signaling axis regulates intestinal homeostasis and inflammation through the migration of immune cells. Controls thereby the specific homing of T-cells, particularly FOXP3+ regulatory T-cells (Tregs), to the large intestine lamina propria. Also required for skin localization of thymus-derived dendritic epidermal T-cells. Plays an important role in mediating cytoprotective function as well as angiogenesis of thrombomodulin. Mechanistically, preferentially signals through the Gi/o pathway to inhibit adenylate cyclase activity and activate a phosphatidylinositol-calcium second messenger system that regulates the release of Ca(2+) ions from intracellular stores. The protein is G-protein coupled receptor 15 (GPR15) of Macaca fascicularis (Crab-eating macaque).